The following is a 500-amino-acid chain: L-arabinose isomerase (500 aa).

Mn(2+) contacts are provided by Glu306, Glu333, His350, and His450.

The protein belongs to the arabinose isomerase family. In terms of assembly, homohexamer. The cofactor is Mn(2+).

It catalyses the reaction beta-L-arabinopyranose = L-ribulose. The protein operates within carbohydrate degradation; L-arabinose degradation via L-ribulose; D-xylulose 5-phosphate from L-arabinose (bacterial route): step 1/3. In terms of biological role, catalyzes the conversion of L-arabinose to L-ribulose. This is L-arabinose isomerase from Shigella flexneri.